We begin with the raw amino-acid sequence, 515 residues long: Anthranilate synthase component 1 (515 aa).

Residues threonine 40 and 291–293 (PYM) contribute to the L-tryptophan site. Chorismate is bound at residue 328 to 329 (GT). Glutamate 361 contacts Mg(2+). Chorismate is bound by residues tyrosine 449, arginine 469, 483-485 (GAG), and glycine 485. A Mg(2+)-binding site is contributed by glutamate 498.

This sequence belongs to the anthranilate synthase component I family. In terms of assembly, heterotetramer consisting of two non-identical subunits: a beta subunit (TrpG) and a large alpha subunit (TrpE). Mg(2+) serves as cofactor.

The enzyme catalyses chorismate + L-glutamine = anthranilate + pyruvate + L-glutamate + H(+). It functions in the pathway amino-acid biosynthesis; L-tryptophan biosynthesis; L-tryptophan from chorismate: step 1/5. Feedback inhibited by tryptophan. Its function is as follows. Part of a heterotetrameric complex that catalyzes the two-step biosynthesis of anthranilate, an intermediate in the biosynthesis of L-tryptophan. In the first step, the glutamine-binding beta subunit (TrpG) of anthranilate synthase (AS) provides the glutamine amidotransferase activity which generates ammonia as a substrate that, along with chorismate, is used in the second step, catalyzed by the large alpha subunit of AS (TrpE) to produce anthranilate. In the absence of TrpG, TrpE can synthesize anthranilate directly from chorismate and high concentrations of ammonia. In Buchnera aphidicola subsp. Schizaphis graminum (strain Sg), this protein is Anthranilate synthase component 1 (trpE).